We begin with the raw amino-acid sequence, 569 residues long: MANSKKQAWFFYTTGLPSDIEIEVDDITFHLHKFPLMSKSKKLHQLITEQEQSKVYSHIKLENFPGGSEIFEMVIKISYGFKVDISVSTAVPLRCAAEYLEMTEEYSPENLISKTEKFLSEFVFTNVQESIKALKACESVSSLAESLCITEQCIDSIVFQASSTDPSSFYGWPINNGGIFTVDRKKQSKDSKTELWFEDLTELSFPIFRRVILSMKSSVLSPEIVERSLLTYAKKHIPGISRSSSASSSSSSSSTTIASENQQRELLETITSDLPLTATTTRSLFGLLRAAIILNASENCRKFLEKKIGSNLEKATLDDLLIPSYSYLNETLYDIDLVERLLRRFLENVAVSSSSLTVVGRLIDGVLGEIASDANLKPEQFYNLAVLLPVQARVYDDGLYRAVDIYFKTHSWILEEEKEKICSVMDCRKLTVEGCTHAAQNERLPLRAVVQVLFLEQLQLRQVITGTLLTEEDGDKTVVDLGRWKEAVKENQVLRLDMDTMRTRVNQLEKECLYLKKVIAKIDKESLLKAKHGAGKWSIGKKFGCKFSAQVCDSQEATMVDRRSRRFLS.

The BTB domain maps to 18 to 87; that stretch reads SDIEIEVDDI…SYGFKVDISV (70 aa). The region spanning 194–459 is the NPH3 domain; that stretch reads ELWFEDLTEL…VQVLFLEQLQ (266 aa). The span at 240-259 shows a compositional bias: low complexity; that stretch reads ISRSSSASSSSSSSSTTIAS. The disordered stretch occupies residues 240–261; sequence ISRSSSASSSSSSSSTTIASEN. Tyrosine 400 is modified (phosphotyrosine).

The protein belongs to the NPH3 family.

It participates in protein modification; protein ubiquitination. In terms of biological role, may act as a substrate-specific adapter of an E3 ubiquitin-protein ligase complex (CUL3-RBX1-BTB) which mediates the ubiquitination and subsequent proteasomal degradation of target proteins. The sequence is that of BTB/POZ domain-containing protein At3g50840 from Arabidopsis thaliana (Mouse-ear cress).